An 81-amino-acid polypeptide reads, in one-letter code: Large ribosomal subunit protein bL31 (81 aa).

Zn(2+)-binding residues include C16, C18, C38, and C41.

Belongs to the bacterial ribosomal protein bL31 family. Type A subfamily. In terms of assembly, part of the 50S ribosomal subunit. It depends on Zn(2+) as a cofactor.

Its function is as follows. Binds the 23S rRNA. The sequence is that of Large ribosomal subunit protein bL31 from Mycobacterium sp. (strain JLS).